A 735-amino-acid chain; its full sequence is Phosphoribosylformylglycinamidine synthase subunit PurL (735 aa).

Histidine 48 is an active-site residue. Residues tyrosine 51 and lysine 90 each contribute to the ATP site. Glutamate 92 contributes to the Mg(2+) binding site. Substrate contacts are provided by residues 93–96 (SHNH) and arginine 115. The active-site Proton acceptor is histidine 94. Aspartate 116 contacts Mg(2+). Residue glutamine 239 coordinates substrate. Residue aspartate 267 coordinates Mg(2+). 311–313 (ESQ) provides a ligand contact to substrate. ATP is bound by residues aspartate 492 and glycine 529. Residue asparagine 530 participates in Mg(2+) binding. Serine 532 is a binding site for substrate.

The protein belongs to the FGAMS family. In terms of assembly, monomer. Part of the FGAM synthase complex composed of 1 PurL, 1 PurQ and 2 PurS subunits.

The protein resides in the cytoplasm. The catalysed reaction is N(2)-formyl-N(1)-(5-phospho-beta-D-ribosyl)glycinamide + L-glutamine + ATP + H2O = 2-formamido-N(1)-(5-O-phospho-beta-D-ribosyl)acetamidine + L-glutamate + ADP + phosphate + H(+). Its pathway is purine metabolism; IMP biosynthesis via de novo pathway; 5-amino-1-(5-phospho-D-ribosyl)imidazole from N(2)-formyl-N(1)-(5-phospho-D-ribosyl)glycinamide: step 1/2. Functionally, part of the phosphoribosylformylglycinamidine synthase complex involved in the purines biosynthetic pathway. Catalyzes the ATP-dependent conversion of formylglycinamide ribonucleotide (FGAR) and glutamine to yield formylglycinamidine ribonucleotide (FGAM) and glutamate. The FGAM synthase complex is composed of three subunits. PurQ produces an ammonia molecule by converting glutamine to glutamate. PurL transfers the ammonia molecule to FGAR to form FGAM in an ATP-dependent manner. PurS interacts with PurQ and PurL and is thought to assist in the transfer of the ammonia molecule from PurQ to PurL. This Bradyrhizobium sp. (strain BTAi1 / ATCC BAA-1182) protein is Phosphoribosylformylglycinamidine synthase subunit PurL.